A 730-amino-acid polypeptide reads, in one-letter code: DNA ligase (730 aa).

The segment at 1–23 (MAGEQHAQPTSVPAEAREKHAQL) is disordered. NAD(+)-binding positions include 44 to 48 (DAEFD), 93 to 94 (SL), and Glu124. The active-site N6-AMP-lysine intermediate is the Lys126. NAD(+)-binding residues include Arg147, Glu184, Lys300, and Lys324. Cys418, Cys421, Cys437, and Cys443 together coordinate Zn(2+). One can recognise a BRCT domain in the interval 638–727 (EGPRPLEGLT…PEAAAEVALP (90 aa)).

This sequence belongs to the NAD-dependent DNA ligase family. LigA subfamily. Mg(2+) serves as cofactor. Mn(2+) is required as a cofactor.

It carries out the reaction NAD(+) + (deoxyribonucleotide)n-3'-hydroxyl + 5'-phospho-(deoxyribonucleotide)m = (deoxyribonucleotide)n+m + AMP + beta-nicotinamide D-nucleotide.. Functionally, DNA ligase that catalyzes the formation of phosphodiester linkages between 5'-phosphoryl and 3'-hydroxyl groups in double-stranded DNA using NAD as a coenzyme and as the energy source for the reaction. It is essential for DNA replication and repair of damaged DNA. In Streptomyces avermitilis (strain ATCC 31267 / DSM 46492 / JCM 5070 / NBRC 14893 / NCIMB 12804 / NRRL 8165 / MA-4680), this protein is DNA ligase.